We begin with the raw amino-acid sequence, 573 residues long: uncharacterized protein (573 aa).

This is an uncharacterized protein from Treponema pallidum (strain Nichols).